The primary structure comprises 801 residues: Cation/H(+) antiporter 7 (801 aa).

13 helical membrane passes run 58 to 78 (PNLE…EILF), 83 to 103 (IPIP…LFSY), 128 to 148 (GAFG…VGML), 154 to 174 (RAAL…YILM), 192 to 212 (EIIL…LTDL), 223 to 243 (VQSC…GTVL), 254 to 274 (IVIV…MLWI), 287 to 307 (VYIY…LNFF), 312 to 332 (YGWF…SALI), 340 to 360 (VGVL…ISWL), 377 to 397 (AISV…ITAF), 407 to 427 (IVLA…LGYI), and 438 to 458 (FTIA…AIEF).

This sequence belongs to the monovalent cation:proton antiporter 2 (CPA2) transporter (TC 2.A.37) family. CHX (TC 2.A.37.4) subfamily. In terms of tissue distribution, expressed in pollen.

The protein resides in the membrane. Its function is as follows. May operate as a cation/H(+) antiporter. In Arabidopsis thaliana (Mouse-ear cress), this protein is Cation/H(+) antiporter 7 (CHX7).